We begin with the raw amino-acid sequence, 93 residues long: MKFAVILLFSLVVLAVASESVEEVRREIDIEDLPEQQRGCADLRQPCTEGDDCSCCGSEGVCNCSHPHKKGCYCKTAGPLEKLAKKFRGCKNK.

The first 18 residues, 1–18 (MKFAVILLFSLVVLAVAS), serve as a signal peptide directing secretion. Residues 19 to 38 (ESVEEVRREIDIEDLPEQQR) constitute a propeptide that is removed on maturation.

This sequence belongs to the neurotoxin 31 family. Post-translationally, contains 5 disulfide bonds. Expressed by the venom gland.

Its subcellular location is the secreted. The protein is U12-lycotoxin-Ls1b of Lycosa singoriensis (Wolf spider).